A 62-amino-acid polypeptide reads, in one-letter code: UPF0434 protein FTL_1400 (62 aa).

This sequence belongs to the UPF0434 family.

The protein is UPF0434 protein FTL_1400 of Francisella tularensis subsp. holarctica (strain LVS).